Reading from the N-terminus, the 538-residue chain is Telomerase Cajal body protein 1 (538 aa).

The segment at 1 to 53 is disordered; sequence MKTSEERLVVPDSLSSDQAPAPVPQGSPVDENTDSEPVPQPCGGDDRSQVAAD. 2 positions are modified to phosphoserine: Ser-27 and Ser-87. The tract at residues 92–128 is disordered; sequence EQELSENVSLPVEDTNQPELASGEDVEGVSEEPGPVD. A compositionally biased stretch (acidic residues) spans 113–128; the sequence is SGEDVEGVSEEPGPVD. WD repeat units lie at residues 154 to 194, 210 to 255, 260 to 301, 311 to 352, 353 to 393, and 399 to 438; these read AHSE…YSAT, EGDT…LRAS, NHLD…RDCE, GQSG…ALLG, GHQG…HLLW, and VTTN…GDSS. 2 disordered regions span residues 471–491 and 509–538; these read QRMF…GDLP and CGGG…DGLI. Thr-478 is subject to Phosphothreonine. Ser-480 carries the phosphoserine modification. Residues 529–538 show a composition bias toward gly residues; sequence RAEGCGDGLI.

Belongs to the TCAB1 family. Component of the telomerase holoenzyme complex composed of one molecule of TERT, one molecule of WRAP53/TCAB1, two molecules of H/ACA ribonucleoprotein complex subunits DKC1, NOP10, NHP2 and GAR1, and a telomerase RNA template component (TERC). The telomerase holoenzyme complex is associated with TEP1, SMG6/EST1A and POT1. Interacts with the chaperonin-containing T-complex (TRiC) complex; which mediates the folding of WRAP53/TCAB1. Interacts with COIL. Interacts with SMN1. Interacts with RNF8. Interacts with histone H2AX. As to expression, preferentially expressed in testis.

It is found in the nucleus. It localises to the cajal body. The protein localises to the chromosome. The protein resides in the telomere. Functionally, RNA chaperone that plays a key role in telomere maintenance and RNA localization to Cajal bodies. Specifically recognizes and binds the Cajal body box (CAB box) present in both small Cajal body RNAs (scaRNAs) and telomerase RNA template component (TERC). Essential component of the telomerase holoenzyme complex, a ribonucleoprotein complex essential for the replication of chromosome termini that elongates telomeres in most eukaryotes. In the telomerase holoenzyme complex, required to stimulate the catalytic activity of the complex. Acts by specifically binding the CAB box of the TERC RNA and controlling the folding of the CR4/CR5 region of the TERC RNA, a critical step for telomerase activity. In addition, also controls telomerase holoenzyme complex localization to Cajal body. During S phase, required for delivery of TERC to telomeres during S phase and for telomerase activity. In addition to its role in telomere maintenance, also required for Cajal body formation, probably by mediating localization of scaRNAs to Cajal bodies. Also plays a role in DNA repair: relocalizes to sites of DNA double-strand breaks in response to DNA damage and promotes the repair of DNA double-strand breaks. Acts by recruiting the ubiquitin ligase RNF8 to DNA breaks and promote both homologous recombination (HR) and non-homologous end joining (NHEJ). The sequence is that of Telomerase Cajal body protein 1 from Mesocricetus auratus (Golden hamster).